The primary structure comprises 379 residues: Alcohol dehydrogenase 3 (379 aa).

Zn(2+) is bound by residues cysteine 47, threonine 49, histidine 69, cysteine 99, cysteine 102, cysteine 105, cysteine 113, and cysteine 177. The an alcohol site is built by threonine 49 and histidine 69. Threonine 49 lines the NAD(+) pocket. Residues 202-207, aspartate 226, lysine 231, threonine 272, valine 295, 295-297, phenylalanine 322, and arginine 372 each bind NAD(+); these read GLGAVG and VGV.

It belongs to the zinc-containing alcohol dehydrogenase family. As to quaternary structure, homodimer. Zn(2+) is required as a cofactor.

It localises to the cytoplasm. It catalyses the reaction a primary alcohol + NAD(+) = an aldehyde + NADH + H(+). The catalysed reaction is a secondary alcohol + NAD(+) = a ketone + NADH + H(+). The sequence is that of Alcohol dehydrogenase 3 (ADH3) from Hordeum vulgare (Barley).